A 286-amino-acid polypeptide reads, in one-letter code: Bifunctional protein FolD (286 aa).

NADP(+) contacts are provided by residues 165–167 (GRS) and Ser190.

Belongs to the tetrahydrofolate dehydrogenase/cyclohydrolase family. In terms of assembly, homodimer.

The enzyme catalyses (6R)-5,10-methylene-5,6,7,8-tetrahydrofolate + NADP(+) = (6R)-5,10-methenyltetrahydrofolate + NADPH. It catalyses the reaction (6R)-5,10-methenyltetrahydrofolate + H2O = (6R)-10-formyltetrahydrofolate + H(+). Its pathway is one-carbon metabolism; tetrahydrofolate interconversion. In terms of biological role, catalyzes the oxidation of 5,10-methylenetetrahydrofolate to 5,10-methenyltetrahydrofolate and then the hydrolysis of 5,10-methenyltetrahydrofolate to 10-formyltetrahydrofolate. In Staphylococcus aureus (strain JH9), this protein is Bifunctional protein FolD.